The primary structure comprises 107 residues: MRDMMGMMKQAKELQAKMKAMQDEIATMEASASSGGGLVTVTLSGKGTLSALKIDPSLMKEDEVEILEDLIIAAHNDAKAKLEAAMAEKTQSLTAGLPIPPGFKLPF.

The protein belongs to the YbaB/EbfC family. Homodimer.

Its subcellular location is the cytoplasm. The protein resides in the nucleoid. Its function is as follows. Binds to DNA and alters its conformation. May be involved in regulation of gene expression, nucleoid organization and DNA protection. This Brucella abortus (strain S19) protein is Nucleoid-associated protein BAbS19_I00290.